A 175-amino-acid polypeptide reads, in one-letter code: Endoribonuclease YbeY (175 aa).

Positions 129, 133, and 139 each coordinate Zn(2+).

The protein belongs to the endoribonuclease YbeY family. Zn(2+) serves as cofactor.

It is found in the cytoplasm. Functionally, single strand-specific metallo-endoribonuclease involved in late-stage 70S ribosome quality control and in maturation of the 3' terminus of the 16S rRNA. The polypeptide is Endoribonuclease YbeY (Lactobacillus gasseri (strain ATCC 33323 / DSM 20243 / BCRC 14619 / CIP 102991 / JCM 1131 / KCTC 3163 / NCIMB 11718 / NCTC 13722 / AM63)).